The chain runs to 330 residues: Olfactory receptor 11H6 (330 aa).

The Extracellular portion of the chain corresponds to 1 to 43; it reads MFFIIHSLVTSVFLTALGPQNRTMHFVTEFVLLGFHGQREMQS. Asn21 is a glycosylation site (N-linked (GlcNAc...) asparagine). Residues 44–64 form a helical membrane-spanning segment; it reads CFFSFILVLYLLTLLGNGAIV. At 65–72 the chain is on the cytoplasmic side; sequence CAVKLDRR. The helical transmembrane segment at 73 to 93 threads the bilayer; it reads LHTPMYILLGNFAFLEIWYIS. The Extracellular portion of the chain corresponds to 94–117; it reads STVPNMLVNILSEIKTISFSGCFL. Cys115 and Cys207 are disulfide-bonded. Residues 118–138 traverse the membrane as a helical segment; the sequence is QFYFFFSLGTTECFFLSVMAY. The Cytoplasmic portion of the chain corresponds to 139–157; it reads DRYLAICRPLHYPSIMTGK. Residues 158-178 traverse the membrane as a helical segment; that stretch reads FCIILVCVCWVGGFLCYPVPI. Residues 179–215 lie on the Extracellular side of the membrane; the sequence is VLISQLPFCGPNIIDHLVCDPGPLFALACISAPSTEL. Residues 216-235 traverse the membrane as a helical segment; the sequence is ICYTFNSMIIFGPFLSILGS. Residues 236–255 are Cytoplasmic-facing; that stretch reads YTLVIRAVLCIPSGAGRTKA. The chain crosses the membrane as a helical span at residues 256–276; the sequence is FSTCGSHLMVVSLFYGTLMVM. The Extracellular portion of the chain corresponds to 277-289; the sequence is YVSPTSGNPAGMQ. Residues 290–310 form a helical membrane-spanning segment; sequence KIITLVYTAMTPFLNPLIYSL. The Cytoplasmic portion of the chain corresponds to 311 to 330; sequence RNKDMKDALKRVLGLTVSQN.

It belongs to the G-protein coupled receptor 1 family.

It localises to the cell membrane. Odorant receptor. The protein is Olfactory receptor 11H6 (OR11H6) of Homo sapiens (Human).